Reading from the N-terminus, the 202-residue chain is Ribonuclease HII (202 aa).

The RNase H type-2 domain occupies 15–202 (QGVAGVDEAG…APIKAFGISA (188 aa)). A divalent metal cation-binding residues include Asp21, Glu22, and Asp113.

It belongs to the RNase HII family. The cofactor is Mn(2+). Mg(2+) serves as cofactor.

The protein localises to the cytoplasm. It carries out the reaction Endonucleolytic cleavage to 5'-phosphomonoester.. Its function is as follows. Endonuclease that specifically degrades the RNA of RNA-DNA hybrids. The protein is Ribonuclease HII of Bordetella avium (strain 197N).